Consider the following 77-residue polypeptide: U11-lycotoxin-Ls1a (77 aa).

The N-terminal stretch at 1–20 (MKLIILTGLVLFAIVSLIEA) is a signal peptide. The propeptide occupies 21-26 (EEESGR).

This sequence belongs to the neurotoxin 19 (CSTX) family. 10 (U11-Lctx) subfamily. Post-translationally, contains 4 disulfide bonds. Expressed by the venom gland.

The protein localises to the secreted. The sequence is that of U11-lycotoxin-Ls1a from Lycosa singoriensis (Wolf spider).